We begin with the raw amino-acid sequence, 717 residues long: Methionine--tRNA ligase (717 aa).

Positions proline 19 to histidine 29 match the 'HIGH' region motif. Zn(2+)-binding residues include cysteine 150, cysteine 153, cysteine 162, and cysteine 166. The 'KMSKS' region motif lies at alanine 356–serine 360. ATP is bound at residue threonine 359. Residues glutamate 573–aspartate 603 are disordered. Residues glutamate 580–glycine 590 are compositionally biased toward low complexity. Positions alanine 593–aspartate 603 are enriched in acidic residues. The tRNA-binding domain maps to aspartate 619–lysine 717.

The protein belongs to the class-I aminoacyl-tRNA synthetase family. MetG type 1 subfamily. As to quaternary structure, homodimer. Zn(2+) is required as a cofactor.

It localises to the cytoplasm. It carries out the reaction tRNA(Met) + L-methionine + ATP = L-methionyl-tRNA(Met) + AMP + diphosphate. Its function is as follows. Is required not only for elongation of protein synthesis but also for the initiation of all mRNA translation through initiator tRNA(fMet) aminoacylation. The sequence is that of Methionine--tRNA ligase from Haloarcula marismortui (strain ATCC 43049 / DSM 3752 / JCM 8966 / VKM B-1809) (Halobacterium marismortui).